The sequence spans 281 residues: Feruloyl esterase A (281 aa).

An N-terminal signal peptide occupies residues 1–21 (MKQFSAKYALILLATAGQALA). 3 disulfide bridges follow: Cys-50–Cys-279, Cys-112–Cys-115, and Cys-248–Cys-255. Asp-98 serves as a coordination point for substrate. N-linked (GlcNAc...) asparagine glycosylation occurs at Asn-100. Tyr-101 provides a ligand contact to substrate. Catalysis depends on Ser-154, which acts as the Nucleophile. Catalysis depends on Asp-215, which acts as the Charge relay system. His-268 contacts substrate. The Charge relay system role is filled by His-268.

In terms of processing, glycosylated.

The protein resides in the secreted. It carries out the reaction feruloyl-polysaccharide + H2O = ferulate + polysaccharide.. With respect to regulation, inhibited by the specific serine esterase inhibitor diisopropylfluorophosphate. Involved in degradation of plant cell walls. Hydrolyzes the feruloyl-arabinose ester bond in arabinoxylans, and the feruloyl-galactose ester bond in pectin. Binds to cellulose. The polypeptide is Feruloyl esterase A (faeA) (Aspergillus niger).